We begin with the raw amino-acid sequence, 342 residues long: UDP-N-acetylglucosamine--N-acetylmuramyl-(pentapeptide) pyrophosphoryl-undecaprenol N-acetylglucosamine transferase (342 aa).

UDP-N-acetyl-alpha-D-glucosamine is bound by residues 10–12, N124, S177, and Q275; that span reads TGG.

It belongs to the glycosyltransferase 28 family. MurG subfamily.

The protein resides in the cell inner membrane. The catalysed reaction is di-trans,octa-cis-undecaprenyl diphospho-N-acetyl-alpha-D-muramoyl-L-alanyl-D-glutamyl-meso-2,6-diaminopimeloyl-D-alanyl-D-alanine + UDP-N-acetyl-alpha-D-glucosamine = di-trans,octa-cis-undecaprenyl diphospho-[N-acetyl-alpha-D-glucosaminyl-(1-&gt;4)]-N-acetyl-alpha-D-muramoyl-L-alanyl-D-glutamyl-meso-2,6-diaminopimeloyl-D-alanyl-D-alanine + UDP + H(+). It functions in the pathway cell wall biogenesis; peptidoglycan biosynthesis. Functionally, cell wall formation. Catalyzes the transfer of a GlcNAc subunit on undecaprenyl-pyrophosphoryl-MurNAc-pentapeptide (lipid intermediate I) to form undecaprenyl-pyrophosphoryl-MurNAc-(pentapeptide)GlcNAc (lipid intermediate II). This Campylobacter jejuni subsp. jejuni serotype O:6 (strain 81116 / NCTC 11828) protein is UDP-N-acetylglucosamine--N-acetylmuramyl-(pentapeptide) pyrophosphoryl-undecaprenol N-acetylglucosamine transferase.